The sequence spans 758 residues: GPI ethanolamine phosphate transferase 2 (758 aa).

N-linked (GlcNAc...) asparagine glycosylation is found at N28, N77, and N178. 3 helical membrane passes run 405–425, 431–451, and 455–472; these read LVAISILGACSILSLILFRNL, LLAFAPFVVQNIIIVFSSSFI, and HVIWYFAAVSLSLLQLLN. N493 is a glycosylation site (N-linked (GlcNAc...) asparagine). A run of 6 helical transmembrane segments spans residues 533-553, 561-581, 598-618, 667-687, 698-718, and 733-753; these read PSPINFLSSMFIAFYKLMPII, PIIASFDYTFFVRIIWSLLLI, LFILLLTRLENMGLYLLYDIW, IFAVGILLFTSVFAGALWWCL, VKTFWIMSSISLTFLCISCFI, and LLYNASWASMYFLAKCLISTI.

Belongs to the PIGG/PIGN/PIGO family. PIGG subfamily.

The protein localises to the endoplasmic reticulum membrane. It participates in glycolipid biosynthesis; glycosylphosphatidylinositol-anchor biosynthesis. Its function is as follows. Ethanolamine phosphate transferase involved in glycosylphosphatidylinositol-anchor biosynthesis. Transfers ethanolamine phosphate to the GPI second mannose. This chain is GPI ethanolamine phosphate transferase 2 (las21), found in Schizosaccharomyces pombe (strain 972 / ATCC 24843) (Fission yeast).